Reading from the N-terminus, the 462-residue chain is 3-isopropylmalate dehydratase large subunit (462 aa).

Cys337, Cys397, and Cys400 together coordinate [4Fe-4S] cluster.

This sequence belongs to the aconitase/IPM isomerase family. LeuC type 1 subfamily. Heterodimer of LeuC and LeuD. [4Fe-4S] cluster serves as cofactor.

The enzyme catalyses (2R,3S)-3-isopropylmalate = (2S)-2-isopropylmalate. The protein operates within amino-acid biosynthesis; L-leucine biosynthesis; L-leucine from 3-methyl-2-oxobutanoate: step 2/4. Functionally, catalyzes the isomerization between 2-isopropylmalate and 3-isopropylmalate, via the formation of 2-isopropylmaleate. The polypeptide is 3-isopropylmalate dehydratase large subunit (Listeria monocytogenes serotype 4a (strain HCC23)).